Reading from the N-terminus, the 101-residue chain is Cyanovirin-N (101 aa).

Cystine bridges form between C8–C22 and C58–C73.

It belongs to the cyanovirin-N family. In solution exists as a metastable domain-swapped homodimer which very slowly converts into a more stable monomeric form at room temperature. Under physiological conditions it is unlikely that the dimeric species exists and indeed the monomer is more active against HIV. Interacts with HIV-1 gp120. Cleavage, or reduction and alkylation of the disulfide bonds results in the loss of anti-HIV activity.

Mannose-binding lectin. The protein is Cyanovirin-N of Nostoc ellipsosporum.